Reading from the N-terminus, the 346-residue chain is Phospholipase A1 (346 aa).

Residues 1–26 (MRKFAAIFVVFFVQCTHLYSLAQARA) form the signal peptide. Residues 27-37 (EPDPGVVEYLK) constitute a propeptide that is removed on maturation. N-linked (GlcNAc...) asparagine glycans are attached at residues Asn44 and Asn72. Ser167 serves as the catalytic Nucleophile. Residue Asn185 is glycosylated (N-linked (GlcNAc...) asparagine). Active-site charge relay system residues include Asp195 and His258.

This sequence belongs to the AB hydrolase superfamily. Lipase family. In terms of processing, contains six disulfide bonds. Post-translationally, N-glycosylated; contains mannose. In terms of tissue distribution, expressed by the venom gland.

It localises to the secreted. It carries out the reaction a 1,2-diacyl-sn-glycero-3-phosphocholine + H2O = a 2-acyl-sn-glycero-3-phosphocholine + a fatty acid + H(+). In terms of biological role, catalyzes the hydrolysis of phosphatidylcholine with phospholipase A1 activity. Induces hemolytic activity. Acts as an allergen. The sequence is that of Phospholipase A1 from Solenopsis invicta (Red imported fire ant).